Consider the following 194-residue polypeptide: Outer-membrane lipoprotein LolB (194 aa).

Positions 1–18 are cleaved as a signal peptide; that stretch reads MTLLLRLFTLGCLLLLAG. C19 is lipidated: N-palmitoyl cysteine. A lipid anchor (S-diacylglycerol cysteine) is attached at C19.

This sequence belongs to the LolB family. In terms of assembly, monomer.

The protein localises to the cell outer membrane. Functionally, plays a critical role in the incorporation of lipoproteins in the outer membrane after they are released by the LolA protein. This Aeromonas hydrophila subsp. hydrophila (strain ATCC 7966 / DSM 30187 / BCRC 13018 / CCUG 14551 / JCM 1027 / KCTC 2358 / NCIMB 9240 / NCTC 8049) protein is Outer-membrane lipoprotein LolB.